A 336-amino-acid polypeptide reads, in one-letter code: Anthranilate phosphoribosyltransferase (336 aa).

5-phospho-alpha-D-ribose 1-diphosphate is bound by residues Gly-81, 84-85, Ser-89, 91-94, 109-117, and Ala-121; these read GD, NIST, and KHGNRGLSS. Gly-81 is a binding site for anthranilate. Residue Ser-93 coordinates Mg(2+). Asn-112 contacts anthranilate. An anthranilate-binding site is contributed by Arg-167. Positions 225 and 226 each coordinate Mg(2+).

The protein belongs to the anthranilate phosphoribosyltransferase family. Homodimer. Mg(2+) is required as a cofactor.

The enzyme catalyses N-(5-phospho-beta-D-ribosyl)anthranilate + diphosphate = 5-phospho-alpha-D-ribose 1-diphosphate + anthranilate. It functions in the pathway amino-acid biosynthesis; L-tryptophan biosynthesis; L-tryptophan from chorismate: step 2/5. Catalyzes the transfer of the phosphoribosyl group of 5-phosphorylribose-1-pyrophosphate (PRPP) to anthranilate to yield N-(5'-phosphoribosyl)-anthranilate (PRA). The chain is Anthranilate phosphoribosyltransferase from Mesorhizobium japonicum (strain LMG 29417 / CECT 9101 / MAFF 303099) (Mesorhizobium loti (strain MAFF 303099)).